Here is a 445-residue protein sequence, read N- to C-terminus: MRVKVLSRNPDDYVRETKLDLQRVPRNYDPALHPFEVAREYVRALNATKLERVFAKPFLSSLDGHRDGVNCMAKHPKSLSTVLSGACDGEVRIWNLTKRQCIRALQAHEGFVRGMCARFCGTSFFTVGDDKTVKQWKMESPGYGEEEEPIHTILGKTVYTGIDHHWKDAVFATCGQQVDIWDEQRTSPMCSLTWGFDSISSVKFNPIETYLLGSCASDRNIVLYDMRQSTPLKKVILNMRTNTLCWNPMEAFIFTAANEDYNLYTFDMRFLTSPVMVHMDHVSAVLDVDYSPTGKEFVSASFDKSVRIFPVDKGHSREVYHTKRMQHVITVKWTSDSRYILCGSDEMNIRLWKANASEKLGVLAPREKAAMNYNQKLKEKFQHHPQIKRIARHRHLPKSIYCQIKEQRIMREARRRKELNRRKHSKPGSVPVVSEKKKHIVAVVQ.

WD repeat units follow at residues 64-104 (GHRD…CIRA), 107-146 (AHEGFVRGMCARFCGTSFFTVGDDKTVKQWKMESPGYGEE), 149-191 (PIHT…PMCS), 194-234 (WGFD…PLKK), 236-276 (ILNM…SPVM), 280-321 (DHVS…EVYH), and 323-362 (KRMQHVITVKWTSDSRYILCGSDEMNIRLWKANASEKLGV). A required for nucleolar location region spans residues 353–441 (KANASEKLGV…VVSEKKKHIV (89 aa)).

It belongs to the WD repeat DCAF13/WDSOF1 family. In terms of assembly, part of the small subunit (SSU) processome, composed of more than 70 proteins and the RNA chaperone small nucleolar RNA (snoRNA) U3. Component of the DCX(DCAF13) E3 ubiquitin ligase complex, at least composed of CUL4 (CUL4A or CUL4B), DDB1, DCAF13 and RBX1.

The protein localises to the nucleus. Its subcellular location is the nucleolus. It participates in protein modification; protein ubiquitination. In terms of biological role, part of the small subunit (SSU) processome, first precursor of the small eukaryotic ribosomal subunit. During the assembly of the SSU processome in the nucleolus, many ribosome biogenesis factors, an RNA chaperone and ribosomal proteins associate with the nascent pre-rRNA and work in concert to generate RNA folding, modifications, rearrangements and cleavage as well as targeted degradation of pre-ribosomal RNA by the RNA exosome. Substrate-recognition component of a DCX (DDB1-CUL4-X-box) E3 ubiquitin-protein ligase complex. The protein is DDB1- and CUL4-associated factor 13 (DCAF13) of Gallus gallus (Chicken).